Here is a 607-residue protein sequence, read N- to C-terminus: Developmental gene 1062 protein (607 aa).

3 disordered regions span residues 62–84, 334–451, and 568–602; these read LQGQQQQQQQQQQNHSQQQHNNQ, ICDD…SNFQ, and DNNTQSQMNNSISVNNHHHHHHHQPNNSNLTNDLL. Low complexity predominate over residues 334–363; it reads ICDDSSNSSTPSLSSYSNGNNKYNNNNNDS. Acidic residues predominate over residues 364 to 382; sequence SESDESDDDDNNDDDDNDS. Composition is skewed to low complexity over residues 383–451 and 568–582; these read IDFN…SNFQ and DNNTQSQMNNSISVN.

This chain is Developmental gene 1062 protein (DG1062), found in Dictyostelium discoideum (Social amoeba).